We begin with the raw amino-acid sequence, 381 residues long: MTVARPSVPAALPLLGELPRLLLLVLLCLPAVWGDCGLPPDVPNAQPALEGRTSFPEDTVITYKCEESFVKIPGEKDSVICLKGSQWSDIEEFCNRSCEVPTRLNSASLKQPYITQNYFPVGTVVEYECRPGYRREPSLSPKLTCLQNLKWSTAVEFCKKKSCPNPGEIRNGQIDVPGGILFGATISFSCNTGYKLFGSTSSFCLISGSSVQWSDPLPECREIYCPAPPQIDNGIIQGERDHYGYRQSVTYACNKGFTMIGEHSIYCTVNNDEGEWSGPPPECRGKSLTSKVPPTVQKPTTVNVPTTEVSPTSQKTTTKTTTPNAQATRSTPVSRTTKHFHETTPNKGSGTTSGTTRLLSGHTCFTLTGLLGTLVTMGLLT.

The signal sequence occupies residues 1–34; that stretch reads MTVARPSVPAALPLLGELPRLLLLVLLCLPAVWG. Sushi domains lie at 35 to 96, 96 to 160, 161 to 222, and 223 to 285; these read DCGL…FCNR, RSCE…FCKK, KSCP…ECRE, and IYCP…ECRG. 2 disulfides stabilise this stretch: C36–C81 and C65–C94. The N-linked (GlcNAc...) asparagine glycan is linked to N95. Cystine bridges form between C98–C145, C129–C158, C163–C204, C190–C220, C225–C267, and C253–C283. Residues 277–354 are disordered; it reads SGPPPECRGK…PNKGSGTTSG (78 aa). The segment covering 287-309 has biased composition (polar residues); the sequence is SLTSKVPPTVQKPTTVNVPTTEV. Positions 310-328 are enriched in low complexity; the sequence is SPTSQKTTTKTTTPNAQAT. Residue S353 is the site of GPI-anchor amidated serine attachment. Positions 354–381 are cleaved as a propeptide — removed in mature form; sequence GTTRLLSGHTCFTLTGLLGTLVTMGLLT.

This sequence belongs to the receptors of complement activation (RCA) family. In terms of assembly, monomer (major form) and non-disulfide-linked, covalent homodimer (minor form). Interacts with ADGRE5. As to quaternary structure, (Microbial infection) Interacts with coxsackievirus A21, coxsackieviruses B1, B3 and B5 capsid proteins. (Microbial infection) Interacts with human enterovirus 70 and D68 capsid proteins. In terms of assembly, (Microbial infection) Interacts with human echoviruses 6, 7, 11, 12, 20 and 21 capsid proteins. Post-translationally, the Ser/Thr-rich domain is heavily O-glycosylated. As to expression, expressed on the plasma membranes of all cell types that are in intimate contact with plasma complement proteins. It is also found on the surfaces of epithelial cells lining extracellular compartments, and variants of the molecule are present in body fluids and in extracellular matrix.

It localises to the cell membrane. The protein resides in the secreted. In terms of biological role, this protein recognizes C4b and C3b fragments that condense with cell-surface hydroxyl or amino groups when nascent C4b and C3b are locally generated during C4 and c3 activation. Interaction of daf with cell-associated C4b and C3b polypeptides interferes with their ability to catalyze the conversion of C2 and factor B to enzymatically active C2a and Bb and thereby prevents the formation of C4b2a and C3bBb, the amplification convertases of the complement cascade. Inhibits complement activation by destabilizing and preventing the formation of C3 and C5 convertases, which prevents complement damage. Its function is as follows. (Microbial infection) Acts as a receptor for Coxsackievirus A21, coxsackieviruses B1, B3 and B5. (Microbial infection) Acts as a receptor for Human enterovirus 70 and D68. Functionally, (Microbial infection) Acts as a receptor for Human echoviruses 6, 7, 11, 12, 20 and 21. This is Complement decay-accelerating factor (CD55) from Homo sapiens (Human).